The following is a 250-amino-acid chain: Short-chain dehydrogenase RED3 (250 aa).

4 residues coordinate NADP(+): isoleucine 16, serine 35, glutamate 63, and asparagine 91. Active-site proton donor residues include serine 145 and tyrosine 164. Residues tyrosine 164, lysine 168, valine 195, and serine 197 each contribute to the NADP(+) site. Lysine 168 acts as the Lowers pKa of active site Tyr in catalysis.

Belongs to the short-chain dehydrogenases/reductases (SDR) family.

Its pathway is polyketide biosynthesis. Short-chain dehydrogenase; part of the gene cluster that mediates the biosynthesis of pyriculol and pyriculariol, two heptaketides that induce lesion formation upon application on rice leaves but are dispensable for pathogenicity. The highly reducing polyketide synthase synthesizes the heptaketide backbone of pyriculol and pyriculariol. Pyriculol and pyriculariol contain several hydroxyl moieties and double bonds, so it can be assumed that several reduction steps occur during biosynthesis. These reactions could be executed by PKS19 itself or partly by the tailoring enzymes OXR1, OXR2, RED1, RED2 or RED3, identified within the cluster. The FAD-linked oxidoreductase OXR1 is the only tailoring enzyme for which the function has been determined yet, and is involved in the oxidation of dihydropyriculol and dihydropyriculariol into pyriculol and pyriculariol, respectively. The chain is Short-chain dehydrogenase RED3 from Pyricularia oryzae (strain 70-15 / ATCC MYA-4617 / FGSC 8958) (Rice blast fungus).